Reading from the N-terminus, the 838-residue chain is P protein (838 aa).

Residues methionine 1–lysine 179 lie on the Cytoplasmic side of the membrane. Disordered stretches follow at residues leucine 38–serine 60 and lysine 74–phenylalanine 94. Over residues histidine 78–serine 87 the composition is skewed to polar residues. The helical transmembrane segment at valine 180–tyrosine 197 threads the bilayer. Residues proline 198–glutamine 330 lie on the Extracellular side of the membrane. Residues asparagine 214, asparagine 218, and asparagine 273 are each glycosylated (N-linked (GlcNAc...) asparagine). The chain crosses the membrane as a helical span at residues valine 331–phenylalanine 347. Residues glutamate 348–threonine 353 lie on the Cytoplasmic side of the membrane. Residues leucine 354–isoleucine 370 traverse the membrane as a helical segment. Over glycine 371–aspartate 384 the chain is Extracellular. A helical membrane pass occupies residues phenylalanine 385–phenylalanine 401. The Cytoplasmic segment spans residues serine 402–tryptophan 423. A helical transmembrane segment spans residues alanine 424 to leucine 440. Over aspartate 441–phenylalanine 513 the chain is Extracellular. Asparagine 442 is a glycosylation site (N-linked (GlcNAc...) asparagine). Residues isoleucine 514–leucine 530 traverse the membrane as a helical segment. Residues tyrosine 531–glycine 620 are Cytoplasmic-facing. A helical membrane pass occupies residues isoleucine 621–phenylalanine 637. The Extracellular portion of the chain corresponds to phenylalanine 638–histidine 647. Residues leucine 648 to leucine 664 traverse the membrane as a helical segment. Residues alanine 665–tryptophan 679 lie on the Cytoplasmic side of the membrane. A helical transmembrane segment spans residues alanine 680–alanine 696. Residues histidine 697 to arginine 720 lie on the Extracellular side of the membrane. A helical transmembrane segment spans residues leucine 721–serine 737. At leucine 738–glutamate 760 the chain is on the cytoplasmic side. Residues valine 761 to cysteine 777 form a helical membrane-spanning segment. Residues leucine 778–methionine 817 lie on the Extracellular side of the membrane. N-linked (GlcNAc...) asparagine glycosylation is present at asparagine 781. Residues valine 818–valine 834 form a helical membrane-spanning segment. Over valine 835–asparagine 838 the chain is Cytoplasmic.

The protein belongs to the CitM (TC 2.A.11) transporter family. As to expression, expressed in melanocytes and retinal pigment epithelium.

The protein resides in the melanosome membrane. It carries out the reaction chloride(in) = chloride(out). Contributes to a melanosome-specific anion (chloride) current that modulates melanosomal pH for optimal tyrosinase activity required for melanogenesis and the melanosome maturation. One of the components of the mammalian pigmentary system. May serve as a key control point at which ethnic skin color variation is determined. Major determinant of brown and/or blue eye color. Seems to regulate the post-translational processing of tyrosinase, which catalyzes the limiting reaction in melanin synthesis. The protein is P protein of Homo sapiens (Human).